The chain runs to 536 residues: GMP synthase [glutamine-hydrolyzing] (536 aa).

In terms of domain architecture, Glutamine amidotransferase type-1 spans 4 to 206; that stretch reads KILILDFGSQ…VLDICGARAD (203 aa). C85 functions as the Nucleophile in the catalytic mechanism. Catalysis depends on residues H180 and E182. A GMPS ATP-PPase domain is found at 207–404; sequence WIMGDYISEA…LGLPYHMVYR (198 aa). 234 to 240 contacts ATP; that stretch reads SGGVDSS.

Homodimer.

It carries out the reaction XMP + L-glutamine + ATP + H2O = GMP + L-glutamate + AMP + diphosphate + 2 H(+). The protein operates within purine metabolism; GMP biosynthesis; GMP from XMP (L-Gln route): step 1/1. In terms of biological role, catalyzes the synthesis of GMP from XMP. This is GMP synthase [glutamine-hydrolyzing] from Albidiferax ferrireducens (strain ATCC BAA-621 / DSM 15236 / T118) (Rhodoferax ferrireducens).